A 316-amino-acid chain; its full sequence is MDYSKTEETPINEEQGSTNSSESRSNEELFSDCDQQHSSIANEFGLTELPKDDKVYELIYRHCQSKLTSHLSNQFEIVSILKNGFQTPLGQAKLKAFQIYAESVAKKSGSCCGNKAAVAEAARVKYGCCGVEKEELKAILMYGFSNNALCLSPDNAPLQCMIDPSSSCNEDGISFLLFSRIIMGKSEVVCSTSQSYPSSMEFDSGVDSLTSPNKYIIWSTHMNTHVLPEFVVCIKTPSILKRKNPKSPWISFPVLINSISKFLNQSQIRLIHKHYKEHQDRRISRCELIQRLRSITGDSLLVQIIKSVGQKVHKDT.

The segment at 1–28 (MDYSKTEETPINEEQGSTNSSESRSNEE) is disordered. The span at 14–23 (EQGSTNSSES) shows a compositional bias: low complexity. The region spanning 28–255 (ELFSDCDQQH…KSPWISFPVL (228 aa)) is the PARP catalytic domain. The region spanning 243 to 314 (KNPKSPWISF…IKSVGQKVHK (72 aa)) is the RST domain.

The protein resides in the nucleus. In terms of biological role, probable inactive ADP-ribosyltransferase that may be involved in stress and developmental responses. The protein is Probable inactive poly [ADP-ribose] polymerase SRO4 (SRO4) of Arabidopsis thaliana (Mouse-ear cress).